We begin with the raw amino-acid sequence, 233 residues long: Ion-translocating oxidoreductase complex subunit E (233 aa).

The next 6 membrane-spanning stretches (helical) occupy residues 18–38 (ALVQ…ATNA), 39–59 (LGLG…VSAL), 69–89 (IPIY…LINA), 92–112 (FGLY…CIVI), 128–148 (ALDG…LGAL), and 182–202 (PFLL…LLAG).

The protein belongs to the NqrDE/RnfAE family. As to quaternary structure, the complex is composed of six subunits: RnfA, RnfB, RnfC, RnfD, RnfE and RnfG.

It localises to the cell inner membrane. Functionally, part of a membrane-bound complex that couples electron transfer with translocation of ions across the membrane. The chain is Ion-translocating oxidoreductase complex subunit E from Yersinia pseudotuberculosis serotype IB (strain PB1/+).